Consider the following 413-residue polypeptide: MDNVRGSIMLQPLPEIAESIDDAICHELSMWPDDAKDLLLIVEAISRGDLKLVLVACAKAVSENNLLMARWCMGELRGMVSISGEPIQRLGAYMLEGLVARLAASGSSIYKSLQSREPESYEFLSYVYVLHEVCPYFKFGYMSANGAIAEAMKDEERIHIIDFQIGQGSQWIALIQAFAARPGGAPNIRITGVGDGSVLVTVKKRLEKLAKKFDVPFRFNAVSRPSCEVEVENLDVRDGEALGVNFAYMLHHLPDESVSMENHRDRLLRMVKSLSPKVVTLVEQECNTNTSPFLPRFLETLSYYTAMFESIDVMLPRNHKERINIEQHCMARDVVNIIACEGAERIERHELLGKWKSRFSMAGFEPYPLSSIISATIRALLRDYSNGYAIEERDGALYLGWMDRILVSSCAWK.

The GRAS domain maps to 41–413 (IVEAISRGDL…RILVSSCAWK (373 aa)). The leucine repeat I (LRI) stretch occupies residues 48 to 108 (GDLKLVLVAC…VARLAASGSS (61 aa)). The interval 127–192 (VYVLHEVCPY…GGAPNIRITG (66 aa)) is VHIID. Positions 158-162 (IHIID) match the VHIID motif. The interval 201–233 (TVKKRLEKLAKKFDVPFRFNAVSRPSCEVEVEN) is leucine repeat II (LRII). The interval 242–336 (LGVNFAYMLH…QHCMARDVVN (95 aa)) is PFYRE. An SAW region spans residues 339-413 (ACEGAERIER…RILVSSCAWK (75 aa)).

The protein belongs to the GRAS family. As to quaternary structure, interacts with Meloidogyne incognita 16D10. Expressed in seedlings, roots, cotyledons, leaves and flowers.

Its subcellular location is the nucleus. In terms of biological role, probable transcription factor involved in plant development. The chain is Scarecrow-like protein 21 (SCL21) from Arabidopsis thaliana (Mouse-ear cress).